The sequence spans 409 residues: uncharacterized protein (409 aa).

Disordered regions lie at residues 12-32, 133-160, and 194-213; these read ENTE…LHCP, EVST…SREQ, and TVSS…GLST. Residues 134-160 are compositionally biased toward polar residues; the sequence is VSTQKSWSSEKNWSGLSQGPGTASREQ.

This is an uncharacterized protein from Mus musculus (Mouse).